A 1379-amino-acid chain; its full sequence is MAVEEKNSPTGAAMTNTGILVPSSQQSLPEWWTKTQKFFSRENTITPTFGYFRLLFGTQPGKTDIALIVIGTIAGIGAGIPFPLLGILFGELVDDLNSSTCSTTQAPPGGYQAAITTKVLQVIYVSILNFVCMYIHTGCWSMVGERLVRRLRTKYFHSLLRQEIAFTDTLPSGDVTSRLVSDIEVIQAGTSEKVGLFIGTISYFVAAYIVAFLKVATIAAMLMSVVPIYFLMAFGGGHYIKKYSGRISTHINAATSIVSSSLSHMSIVHAFNANARLEALFAQHLVSARMDALKKAITHSIQFGMLYFVAYASNALAFWQGSRMIADLAEGKPSKVSVGAVYTVIFVLLDASFVLSQMAPFMHIFASAASAGDRLMTTIKRQSAIDGTSSEGDSTISLASEEIELQDVTFNYPARPEVPVLQGVSFKIPPNKHTAIVGTSGSGKSTVVALLERLYDPITGCVRVGNRDLKEINVRHLRGSIGLVQQEPNLLDRSILENIAHGLVSSSQEKHKHLLPTLLGPSLSELTEKIRQGASEDEAVTEQGDVVREIVNLTRHAATLSNAIDFINALPDGLATRVGSSGAELSGGQKQRIALARALIRDPPVLLLDEATAALDSTSERLIQAALNKVSENVTTVSIAHRLATAKDADNIIVMQKGRVMEQGTHMDLVARDGVYAGMVRLQNIGKFSSSSSIMTESTQVDANIDRSLTTDTLLNKEEKLSLEQGVLDEKEKPAQLYMPEEADSLPTEPENEKEKPKQTLWATMKGSFPLIRPNILLISLGLITSIMIGVSYTGEAVIFGHTVGSLSVCRGGPSIRSSGMLFGLLFFILAIVKFAAVIVNGAAFGWAAEKTLYRTRVLSLRSLLRQPLEWHNADGRTPGLLVALVTSDASALSSLTGTTIGVLFSTVANLFAGVILSHVIAWKIAVVLLATLPVLLASGVLRLRVMAQYQKKHQKAYAKATAITVESVDNIKSIAAFSLEQEAYSVFNRSLKAPYKSNMKSVLHGNFWLSLAYSISTLVYALAYWWGSQQILAGMYTQVQFFIVLPALLFSTQSCGQMFALVPDISKARIAASNIVDLLSIKHEGDEEYDKTGSKASAKHTDPRFNMLEDKPRDVEAQLITTTPSSFPTKGMGVQFRNVHFRYPSRPNQPALDDLSINISPGQFCALVGPSGSGKSTTFALLEKFYNPASGSIIIDGVDITKQSGAAFRDTIALVPQENVMFEGTVAFNIGLGARPDVEATQEEIEEACRLANIHDTIAALPDGYNTVCSQDGKQFSGGQRQRLSIARALVRKPRLLLLDESTSALDVESEKHVQDALAKVARKTTIVAIAHRLNTIHRADRIFMIEGGRCVDQGTHAELVERCESYRANVIHQSLDA.

The helical transmembrane segment at 65–85 (IALIVIGTIAGIGAGIPFPLL) threads the bilayer. Residues 69–367 (VIGTIAGIGA…MAPFMHIFAS (299 aa)) enclose the ABC transmembrane type-1 1 domain. N-linked (GlcNAc...) asparagine glycosylation occurs at N97. 5 consecutive transmembrane segments (helical) span residues 119–139 (VLQV…HTGC), 193–213 (KVGL…VAFL), 215–235 (VATI…MAFG), 301–321 (IQFG…FWQG), and 336–356 (VSVG…FVLS). The ABC transporter 1 domain occupies 403 to 682 (IELQDVTFNY…DGVYAGMVRL (280 aa)). 438–445 (GTSGSGKS) is a binding site for ATP. N-linked (GlcNAc...) asparagine glycosylation is found at N552 and N633. Residues 738–758 (YMPEEADSLPTEPENEKEKPK) form a disordered region. 4 consecutive transmembrane segments (helical) span residues 781–801 (LGLI…VIFG), 820–840 (GMLF…AVIV), 881–901 (LLVA…GTTI), and 920–942 (VIAW…SGVL). The ABC transmembrane type-1 2 domain occupies 781–1068 (LGLITSIMIG…MFALVPDISK (288 aa)). N989 is a glycosylation site (N-linked (GlcNAc...) asparagine). 2 helical membrane passes run 1008–1028 (FWLS…YWWG) and 1032–1052 (ILAG…LLFS). One can recognise an ABC transporter 2 domain in the interval 1135–1374 (VQFRNVHFRY…CESYRANVIH (240 aa)). 1170 to 1177 (GPSGSGKS) provides a ligand contact to ATP.

This sequence belongs to the ABC transporter superfamily. ABCB family. Multidrug resistance exporter (TC 3.A.1.201) subfamily.

It is found in the cell membrane. Functionally, pleiotropic ABC efflux transporter that may be involved in the modulation susceptibility to a wide range of unrelated cytotoxic compounds. In Trichophyton interdigitale (strain MR816), this protein is ABC multidrug transporter MDR2.